We begin with the raw amino-acid sequence, 132 residues long: NADH-quinone oxidoreductase subunit A (132 aa).

Helical transmembrane passes span Phe14–Ile34, Phe66–Trp86, and Ile96–Ile116.

The protein belongs to the complex I subunit 3 family. NDH-1 is composed of 13 different subunits. Subunits NuoA, H, J, K, L, M, N constitute the membrane sector of the complex.

The protein resides in the cell membrane. The enzyme catalyses a quinone + NADH + 5 H(+)(in) = a quinol + NAD(+) + 4 H(+)(out). NDH-1 shuttles electrons from NADH, via FMN and iron-sulfur (Fe-S) centers, to quinones in the respiratory chain. The immediate electron acceptor for the enzyme in this species is believed to be ubiquinone. Couples the redox reaction to proton translocation (for every two electrons transferred, four hydrogen ions are translocated across the cytoplasmic membrane), and thus conserves the redox energy in a proton gradient. This Buchnera aphidicola subsp. Baizongia pistaciae (strain Bp) protein is NADH-quinone oxidoreductase subunit A.